The sequence spans 1328 residues: 5'-3' exoribonuclease 1 (1328 aa).

The disordered stretch occupies residues 1211 to 1328 (AGKNRKTNVS…VQPMGKLQIN (118 aa)). Residues 1217–1231 (TNVSANNVSQGTDSR) are compositionally biased toward polar residues. The segment covering 1275 to 1286 (HKSKSKFSKGNH) has biased composition (basic residues).

This sequence belongs to the 5'-3' exonuclease family. Monomer. Requires Mg(2+) as cofactor.

The protein localises to the cytoplasm. Its subcellular location is the perinuclear region. It is found in the P-body. Strand exchange activity is enhanced by fatty acid synthase (stimulatory factor P190/210). Its function is as follows. Multifunctional protein that exhibits several independent functions at different levels of the cellular processes. 5'-3' exonuclease component of the nonsense-mediated mRNA decay (NMD) which is a highly conserved mRNA degradation pathway, an RNA surveillance system whose role is to identify and rid cells of mRNA with premature termination codons and thus prevents accumulation of potentially harmful truncated proteins. Involved in the degradation of several hypomodified mature tRNA species and participates in the 5'-processing or the degradation of the snoRNA precursors and rRNA processing. This Schizosaccharomyces pombe (strain 972 / ATCC 24843) (Fission yeast) protein is 5'-3' exoribonuclease 1 (exo2).